Here is a 237-residue protein sequence, read N- to C-terminus: rRNA-processing protein EFG1 (237 aa).

The tract at residues 1–24 is disordered; the sequence is MPKTVKNPKNNKSRSRGAPIQVAE. Coiled coils occupy residues 53-113 and 166-186; these read DKKI…ISQT and LKIT…LMEE. A disordered region spans residues 206–237; that stretch reads NDKTQKAVLTEEIDAPEQKQDEQQEEQDDFFE. Acidic residues predominate over residues 228 to 237; sequence QQEEQDDFFE.

It belongs to the EFG1 family.

It localises to the nucleus. The protein localises to the nucleolus. Functionally, involved in rRNA processing. In Candida albicans (strain SC5314 / ATCC MYA-2876) (Yeast), this protein is rRNA-processing protein EFG1.